The chain runs to 763 residues: Phosphoglycerol transferase I (763 aa).

The next 4 membrane-spanning stretches (helical) occupy residues 1 to 21 (MSEL…AWKA), 24 to 44 (NTWW…LNIT), 77 to 97 (ILPG…LGWI), and 108 to 128 (VGYS…SPAF).

Belongs to the OpgB family.

The protein resides in the cell inner membrane. The catalysed reaction is a phosphatidylglycerol + a membrane-derived-oligosaccharide D-glucose = a 1,2-diacyl-sn-glycerol + a membrane-derived-oligosaccharide 6-(glycerophospho)-D-glucose.. It participates in glycan metabolism; osmoregulated periplasmic glucan (OPG) biosynthesis. In terms of biological role, transfers a phosphoglycerol residue from phosphatidylglycerol to the membrane-bound nascent glucan backbones. This Salmonella arizonae (strain ATCC BAA-731 / CDC346-86 / RSK2980) protein is Phosphoglycerol transferase I.